A 517-amino-acid chain; its full sequence is Probable bifunctional methylthioribulose-1-phosphate dehydratase/enolase-phosphatase E1 (517 aa).

The methylthioribulose-1-phosphate dehydratase stretch occupies residues 1–242; it reads MACSGCSCEA…CIKLYQLGID (242 aa). C114 contributes to the substrate binding site. Zn(2+) is bound by residues H132 and H134. E157 serves as the catalytic Proton donor/acceptor; for methylthioribulose-1-phosphate dehydratase activity. H207 contacts Zn(2+). Residues 278–517 are enolase-phosphatase E1; the sequence is VVLDIEGTTT…FRTIKSFSEI (240 aa). Residues D281 and E283 each contribute to the Mg(2+) site. Substrate-binding positions include 416–417 and K450; that span reads SS. D476 contacts Mg(2+).

In the N-terminal section; belongs to the aldolase class II family. MtnB subfamily. The protein in the C-terminal section; belongs to the HAD-like hydrolase superfamily. MasA/MtnC family. It depends on Zn(2+) as a cofactor. Requires Mg(2+) as cofactor.

It catalyses the reaction 5-(methylsulfanyl)-D-ribulose 1-phosphate = 5-methylsulfanyl-2,3-dioxopentyl phosphate + H2O. The enzyme catalyses 5-methylsulfanyl-2,3-dioxopentyl phosphate + H2O = 1,2-dihydroxy-5-(methylsulfanyl)pent-1-en-3-one + phosphate. Its pathway is amino-acid biosynthesis; L-methionine biosynthesis via salvage pathway; L-methionine from S-methyl-5-thio-alpha-D-ribose 1-phosphate: step 2/6. It participates in amino-acid biosynthesis; L-methionine biosynthesis via salvage pathway; L-methionine from S-methyl-5-thio-alpha-D-ribose 1-phosphate: step 3/6. It functions in the pathway amino-acid biosynthesis; L-methionine biosynthesis via salvage pathway; L-methionine from S-methyl-5-thio-alpha-D-ribose 1-phosphate: step 4/6. This chain is Probable bifunctional methylthioribulose-1-phosphate dehydratase/enolase-phosphatase E1, found in Zea mays (Maize).